We begin with the raw amino-acid sequence, 136 residues long: Probable glycine cleavage system H protein 3 (136 aa).

A Lipoyl-binding domain is found at 28-109 (MVTVGITSLG…PYDAWIVKIK (82 aa)). An N6-lipoyllysine modification is found at Lys-69.

It belongs to the GcvH family. The glycine cleavage system is composed of four proteins: P, T, L and H. (R)-lipoate is required as a cofactor.

Its function is as follows. The glycine cleavage system catalyzes the degradation of glycine. The H protein shuttles the methylamine group of glycine from the P protein to the T protein. The sequence is that of Probable glycine cleavage system H protein 3 from Sulfurisphaera tokodaii (strain DSM 16993 / JCM 10545 / NBRC 100140 / 7) (Sulfolobus tokodaii).